The chain runs to 337 residues: Basic membrane protein A2 (337 aa).

A signal peptide spans 1-17 (MNKLLLLILFECIIFLS). A lipid anchor (N-palmitoyl cysteine) is attached at Cys-18. Residue Cys-18 is the site of S-diacylglycerol cysteine attachment.

This sequence belongs to the BMP lipoprotein family. Monomer.

The protein resides in the cell inner membrane. Immunogenic protein. May be part of an ABC-type nucleoside uptake system involved in the purine salvage pathway. The protein is Basic membrane protein A2 (bmpA2) of Borrelia garinii subsp. bavariensis (strain ATCC BAA-2496 / DSM 23469 / PBi) (Borreliella bavariensis).